A 402-amino-acid chain; its full sequence is Thyroid hormone receptor alpha (402 aa).

Residues 1–22 (MEQKPSTLDPLSEPEDTRWLDG) are disordered. The tract at residues 1–50 (MEQKPSTLDPLSEPEDTRWLDGKRKRKSSQCLVKSSMSGYIPSYLDKDEQ) is modulating. Position 12 is a phosphoserine; by CK2 (serine 12). Serine 28 is subject to Phosphoserine. Residues cysteine 51, cysteine 54, cysteine 68, cysteine 71, cysteine 89, cysteine 95, cysteine 105, and cysteine 108 each coordinate Zn(2+). NR C4-type zinc fingers lie at residues 51–71 (CVVC…CEGC) and 89–113 (CKYD…FKKC). The nuclear receptor DNA-binding region spans 51–125 (CVVCGDKATG…VGMAMDLVLD (75 aa)). The region spanning 161–402 (EEWELIHVVT…ELFPPLFLEV (242 aa)) is the NR LBD domain. 3,3',5-triiodo-L-thyronine is bound by residues arginine 226 and serine 275.

Belongs to the nuclear hormone receptor family. NR1 subfamily. As to quaternary structure, probably interacts with SFPQ.

It is found in the nucleus. Its function is as follows. Nuclear hormone receptor that can act as a repressor or activator of transcription. High affinity receptor for thyroid hormones, including triiodothyronine and thyroxine. This is Thyroid hormone receptor alpha (THRA) from Aptenodytes patagonicus (King penguin).